The sequence spans 232 residues: Orotidine 5'-phosphate decarboxylase (232 aa).

Residues Asp-10, Lys-32, 59–68 (DLKFHDIPNT), Thr-119, Arg-180, Gln-189, Gly-209, and Arg-210 contribute to the substrate site. Lys-61 serves as the catalytic Proton donor.

Belongs to the OMP decarboxylase family. Type 1 subfamily. As to quaternary structure, homodimer.

The catalysed reaction is orotidine 5'-phosphate + H(+) = UMP + CO2. The protein operates within pyrimidine metabolism; UMP biosynthesis via de novo pathway; UMP from orotate: step 2/2. Functionally, catalyzes the decarboxylation of orotidine 5'-monophosphate (OMP) to uridine 5'-monophosphate (UMP). This is Orotidine 5'-phosphate decarboxylase from Actinobacillus succinogenes (strain ATCC 55618 / DSM 22257 / CCUG 43843 / 130Z).